A 751-amino-acid chain; its full sequence is Transposable element P transposase (751 aa).

A THAP-type zinc finger spans residues 1-77 (MKYCKFCCKA…LNADAVPSKV (77 aa)).

Functionally, P-element transposase that specifically mediates transposition of P-elements. Mediates both; precise and imprecise excision. This chain is Transposable element P transposase, found in Drosophila melanogaster (Fruit fly).